An 854-amino-acid polypeptide reads, in one-letter code: Iron and copper transporter IacT (854 aa).

Residues 187-194 (IELIVTAQ) carry the TonB box motif. One can recognise a TBDR plug domain in the interval 199–315 (DAQDVPLSLT…PAGVVNVISR (117 aa)). Residues 320–854 (QPEMRISALY…TYGVRVSASF (535 aa)) form the TBDR beta-barrel domain. The short motif at 839–854 (GFGDPVTYGVRVSASF) is the TonB C-terminal box element.

Belongs to the TonB-dependent receptor family.

The protein localises to the cell outer membrane. Its function is as follows. Involved in the TonB-dependent uptake of copper and iron under conditions in which the concentration of copper exceeds that of the iron. The polypeptide is Iron and copper transporter IacT (Nostoc sp. (strain PCC 7120 / SAG 25.82 / UTEX 2576)).